Reading from the N-terminus, the 437-residue chain is MESVKNAKRSYEKEYRQKVCSPVEAAAVVKSGDCLCFPISVGEPTLFVRALAARRHELEGVVINQQHHLCPDYFTEDSAPHIKVNAWFTSHVSREAVQKGWADFVPNYFHEVPRLLRDYWPVDVAGTVVSPMDEHGYFTCSLSVAYTMEAIKKAKKVVVQVNPQAPRTHGNCHIHISEVDHIIECDEPLASLTIPPITPVEEAIGGYISELVEDGSCLQLGWGGIPNSVCKALLHKKDLGIHTELLSDGMVDLMLSGAVNNSRKQTHTGKTVATFALGTSRLYEFMNENPRIEMHPVDYVNYPHNIGKNDNVVSINATLEVDLLGQCCSESFGHLQYSGTGGQADFVRGSNISNGGKGFITTASTAKNGTISRIVPTLAPGASVTTGKNDVDYVVTEFGVAKLRGQTARQRAINLINIAHPDFRGELTEAARRMNRI.

Residue 221–225 participates in CoA binding; it reads GWGGI. Glutamate 244 functions as the 5-glutamyl coenzyme A thioester intermediate in the catalytic mechanism. Positions 319, 342, and 367 each coordinate CoA.

It belongs to the acetyl-CoA hydrolase/transferase family. Homodimer.

It catalyses the reaction cyclohexane-1-carboxylate + succinyl-CoA = cyclohexane-1-carbonyl-CoA + succinate. It carries out the reaction cyclohexane-1-carboxylate + butanoyl-CoA = cyclohexane-1-carbonyl-CoA + butanoate. Functionally, acyl-CoA transferase involved in the anaerobic degradation of cyclohexane carboxylic acid (CHC). Catalyzes the activation of CHC to cyclohexane-1-carbonyl-CoA (CHCoA). Benzoic acid and cyclohex-1-ene-1-carboxylic acid can also be used as substrates, but with lower specific activity. Shows highest activity with succinyl-CoA and butanoyl-coA as a CoA donor, and lower activity with crotonyl-CoA, acetyl-CoA, glutaryl-CoA, CH1eneCoA, propionyl-CoA and acetoacetyl-CoA. In vitro, the enzyme can use butanoyl-coA as a CoA donor with greater efficiency than succinyl-CoA. However, succinyl-CoA is the most abundant CoA ester in exponentially grown cells, whereas butanoyl-coA is hardly detectable, indicating that succinyl-CoA is the natural CoA donor for CHC activation. The chain is Succinyl-CoA:cyclohexane-1-carboxylate CoA transferase from Geobacter metallireducens (strain ATCC 53774 / DSM 7210 / GS-15).